A 355-amino-acid polypeptide reads, in one-letter code: Protein RecA (355 aa).

65 to 72 (GPESSGKT) provides a ligand contact to ATP. Positions 333–355 (IEEKDEKQAEAEKNENTNLFDEE) are disordered. The segment covering 336–347 (KDEKQAEAEKNE) has biased composition (basic and acidic residues).

It belongs to the RecA family.

Its subcellular location is the cytoplasm. Can catalyze the hydrolysis of ATP in the presence of single-stranded DNA, the ATP-dependent uptake of single-stranded DNA by duplex DNA, and the ATP-dependent hybridization of homologous single-stranded DNAs. It interacts with LexA causing its activation and leading to its autocatalytic cleavage. This chain is Protein RecA, found in Staphylococcus carnosus (strain TM300).